The chain runs to 558 residues: Putative ABC transporter ATP-binding protein SMU_1934c (558 aa).

2 consecutive ABC transporter domains span residues Ile5–Glu246 and Phe295–Lys527. ATP-binding positions include Gly39 to Ser46 and Gly328 to Ser335.

It belongs to the ABC transporter superfamily.

It localises to the cell membrane. Functionally, probably part of an ABC transporter complex. Responsible for energy coupling to the transport system. This Streptococcus mutans serotype c (strain ATCC 700610 / UA159) protein is Putative ABC transporter ATP-binding protein SMU_1934c (sdcBA).